The following is a 514-amino-acid chain: Beta-glucosidase 16 (514 aa).

The signal sequence occupies residues 1–21 (MRGKFLSLLLLITLACIGVSA). Glutamine 49 serves as a coordination point for a beta-D-glucoside. Asparagine 80 carries an N-linked (GlcNAc...) asparagine glycan. Residues histidine 153 and 198–199 (NE) contribute to the a beta-D-glucoside site. Glutamate 199 serves as the catalytic Proton donor. A disulfide bond links cysteine 218 and cysteine 226. A beta-D-glucoside is bound at residue tyrosine 343. An N-linked (GlcNAc...) asparagine glycan is attached at asparagine 357. A beta-D-glucoside is bound by residues glutamate 413, tryptophan 458, 465–466 (EW), and phenylalanine 474. The active-site Nucleophile is the glutamate 413.

Belongs to the glycosyl hydrolase 1 family. As to expression, expressed at low levels in cauline leaves and flowers.

It catalyses the reaction Hydrolysis of terminal, non-reducing beta-D-glucosyl residues with release of beta-D-glucose.. This chain is Beta-glucosidase 16, found in Arabidopsis thaliana (Mouse-ear cress).